Here is a 155-residue protein sequence, read N- to C-terminus: UPF0178 protein Clos_2709 (155 aa).

Belongs to the UPF0178 family.

This is UPF0178 protein Clos_2709 from Alkaliphilus oremlandii (strain OhILAs) (Clostridium oremlandii (strain OhILAs)).